Consider the following 630-residue polypeptide: Adenine DNA glycosylase (630 aa).

The segment covering 54-72 (MRKCREKKEAEREAEREAE) has biased composition (basic and acidic residues). Residues 54–123 (MRKCREKKEA…ALGGDIEDLF (70 aa)) form a disordered region. The span at 73-123 (REAEEEEKAEEAEAEADKEEAEEESEEEEEEEEEEAEAEEEALGGDIEDLF) shows a compositional bias: acidic residues. Residue Glu168 is the Proton donor/acceptor of the active site. [4Fe-4S] cluster is bound by residues Cys341, Cys348, Cys351, and Cys357. Residues 383 to 536 (PRHDFCCVCV…RKVPPFRLQH (154 aa)) form the Nudix hydrolase domain. The short motif at 427 to 451 (VILNEEADSATRRNAINVYLKEAFR) is the Nudix box element.

It belongs to the Nth/MutY family. [4Fe-4S] cluster serves as cofactor.

It localises to the nucleus. The catalysed reaction is Hydrolyzes free adenine bases from 7,8-dihydro-8-oxoguanine:adenine mismatched double-stranded DNA, leaving an apurinic site.. Its function is as follows. Involved in oxidative DNA damage repair. Initiates repair of A*oxoG to C*G by removing the inappropriately paired adenine base from the DNA backbone. Possesses both adenine and 2-OH-A DNA glycosylase activities. In Arabidopsis thaliana (Mouse-ear cress), this protein is Adenine DNA glycosylase (MYH).